The following is a 1533-amino-acid chain: Actin cytoskeleton-regulatory complex protein pan-1 (1533 aa).

Positions 1–204 (MYSNSNAFLG…PPPPVKPQAT (204 aa)) are disordered. Composition is skewed to low complexity over residues 19–46 (QQPQQQQQQYGAPSPFGQQGPMQPQPTG), 53–136 (GFAP…FQTG), 143–170 (IPQQFQQQQSFQQQQQQQQQPSIQQPQP), and 177–193 (QIQAPAQQPAPTAQGGI). Residues 244-333 (DQARFETLFK…DHIKNEVSSM (90 aa)) form the EH 1 domain. An EF-hand 1 domain is found at 277-312 (LDGDSLSQIWTLADTTRSGQLHFPEFALAMYLCNLK). Residues 345 to 359 (AGSSSAPASNAPSFA) are compositionally biased toward low complexity. 2 disordered regions span residues 345–378 (AGSSSAPASNAPSFATQQNTAAVPTIQQPQPQPS) and 393–423 (QQTGFMGQNQGLQPQQTGFPGMNPQPTGYAG). 2 stretches are compositionally biased toward polar residues: residues 360-378 (TQQNTAAVPTIQQPQPQPS) and 393-410 (QQTGFMGQNQGLQPQQTG). The 90-residue stretch at 513–602 (EKTRYDALFR…PELVPPSARN (90 aa)) folds into the EH 2 domain. The EF-hand 2 domain maps to 546 to 581 (LDKPDLERIWTLADNGNKGRLDLDEFAVAMHLIYRK). Over residues 649 to 664 (NRKDATVFKNNDEEVG) the composition is skewed to basic and acidic residues. 4 disordered regions span residues 649–691 (NRKD…GDDL), 894–917 (IEDSLKEGAPDSTSEHEKRRWEDA), 935–1306 (SRAA…STNP), and 1334–1533 (DAIS…RVLD). A coiled-coil region spans residues 690–890 (DLTIEQLRKK…RDVEDSVREF (201 aa)). Composition is skewed to basic and acidic residues over residues 894 to 916 (IEDSLKEGAPDSTSEHEKRRWED) and 935 to 947 (SRAARIRSQDRQG). The span at 968 to 982 (TPSPSISRTSTPAST) shows a compositional bias: low complexity. Residues 1026-1209 (ETAAQRAERE…KQLEAIDDED (184 aa)) are a coiled coil. Basic and acidic residues-rich tracts occupy residues 1031 to 1063 (RAERERAERAEKRRQAEEEDARREAERQAKLAE), 1090 to 1164 (GKAD…EEEK), and 1173 to 1203 (EAKEKEAQLAARRAEIEAARKREEELRKQLE). Residues 1204-1218 (AIDDEDSSSSDEEGP) show a composition bias toward acidic residues. The span at 1221–1237 (ITPQASTPTVGGSQVGT) shows a compositional bias: polar residues. Residues 1279–1293 (SQSSEASTSSVAAPV) show a composition bias toward low complexity. Positions 1348-1367 (DDDDDDWGSEKGSDDEDSDD) are enriched in acidic residues. The span at 1412–1495 (SSPPPPPAPV…PPPGGAPAPS (84 aa)) shows a compositional bias: pro residues. One can recognise a WH2 domain in the interval 1500-1517 (RPAGLLGEIQAGRALKKT).

The protein belongs to the PAN1 family. Component of the PAN1 actin cytoskeleton-regulatory complex.

The protein resides in the cell membrane. It is found in the endosome membrane. It localises to the cytoplasm. Its subcellular location is the cytoskeleton. The protein localises to the actin patch. In terms of biological role, component of the PAN1 actin cytoskeleton-regulatory complex required for the internalization of endosomes during actin-coupled endocytosis. The complex links the site of endocytosis to the cell membrane-associated actin cytoskeleton. Mediates uptake of external molecules and vacuolar degradation of plasma membrane proteins. Plays a role in the proper organization of the cell membrane-associated actin cytoskeleton and promotes its destabilization. This is Actin cytoskeleton-regulatory complex protein pan-1 (pan-1) from Neurospora crassa (strain ATCC 24698 / 74-OR23-1A / CBS 708.71 / DSM 1257 / FGSC 987).